The sequence spans 1163 residues: Rho GTPase-activating protein 45 (1163 aa).

A disordered region spans residues 1–99 (MFSRKKRELM…KRPTSLSRHA (99 aa)). 2 positions are modified to phosphoserine: Ser-23 and Ser-25. A compositionally biased stretch (basic and acidic residues) spans 55 to 65 (LPKELPRKDGA). Ser-100, Ser-120, and Ser-126 each carry phosphoserine. Disordered stretches follow at residues 118–137 (HRSPLTAASPGELPTEGTGP), 262–282 (PPGDSSQSMESLYGSGSEGTP), and 454–475 (EEEQAGTAPGAGSTATKTLDKR). The F-BAR domain occupies 296–566 (EEVDVLLQRC…SSKLYDPGQQ (271 aa)). Residues 403-526 (EHEKRRKEIK…QIQEVIRQSD (124 aa)) adopt a coiled-coil conformation. Low complexity predominate over residues 458–470 (AGTAPGAGSTATK). Phosphoserine is present on residues Ser-596, Ser-605, and Ser-619. The segment at 610–695 (DVAGPEAAGS…VDPEGGAGAS (86 aa)) is disordered. Basic residues predominate over residues 633–644 (KGHRAGRGHQVH). Ser-646 carries the phosphoserine modification. Positions 673–682 (TSSSGTMSST) are enriched in low complexity. The Phorbol-ester/DAG-type zinc finger occupies 729 to 774 (THRLRKLRTPAKCRECNSYVYFQGAECEECCLACHKKCLETLAIQC). The Rho-GAP domain maps to 788 to 1001 (QDFSHAARSA…TLIVHYGLVF (214 aa)). 4 positions are modified to phosphoserine: Ser-976, Ser-1054, Ser-1057, and Ser-1059. Disordered stretches follow at residues 1042 to 1067 (AAEDGCRESRVVSNDSDSDLEEASEL) and 1087 to 1163 (SEAS…PEFV). Residues 1087-1099 (SEASLEEASGSHS) show a composition bias toward low complexity. Residues 1125 to 1137 (SGFNTNQSNNVLQ) are compositionally biased toward polar residues.

It is found in the cytoplasm. The protein localises to the cell projection. The protein resides in the ruffle membrane. Contains a GTPase activator for the Rho-type GTPases (RhoGAP) domain that would be able to negatively regulate the actin cytoskeleton as well as cell spreading. However, also contains N-terminally a BAR-domin which is able to play an autoinhibitory effect on this RhoGAP activity. This Pongo abelii (Sumatran orangutan) protein is Rho GTPase-activating protein 45.